We begin with the raw amino-acid sequence, 625 residues long: 1-deoxy-D-xylulose-5-phosphate synthase (625 aa).

Residues histidine 84 and 125 to 127 (GHS) each bind thiamine diphosphate. Aspartate 156 is a Mg(2+) binding site. Residues 157–158 (GA), asparagine 185, phenylalanine 292, and glutamate 373 each bind thiamine diphosphate. A Mg(2+)-binding site is contributed by asparagine 185.

The protein belongs to the transketolase family. DXPS subfamily. Homodimer. The cofactor is Mg(2+). Requires thiamine diphosphate as cofactor.

The enzyme catalyses D-glyceraldehyde 3-phosphate + pyruvate + H(+) = 1-deoxy-D-xylulose 5-phosphate + CO2. The protein operates within metabolic intermediate biosynthesis; 1-deoxy-D-xylulose 5-phosphate biosynthesis; 1-deoxy-D-xylulose 5-phosphate from D-glyceraldehyde 3-phosphate and pyruvate: step 1/1. In terms of biological role, catalyzes the acyloin condensation reaction between C atoms 2 and 3 of pyruvate and glyceraldehyde 3-phosphate to yield 1-deoxy-D-xylulose-5-phosphate (DXP). The chain is 1-deoxy-D-xylulose-5-phosphate synthase from Marinomonas sp. (strain MWYL1).